The sequence spans 301 residues: Negative regulator of the PHO system (301 aa).

The Protein kinase domain maps to 7 to 297 (FKQLERLGNG…AQQALSHPLF (291 aa)). ATP-binding positions include 13–21 (LGNGTYATV) and lysine 36. Aspartate 133 serves as the catalytic Proton acceptor.

The protein belongs to the protein kinase superfamily. CMGC Ser/Thr protein kinase family. CDC2/CDKX subfamily. As to quaternary structure, interacts with a number of cyclins.

The catalysed reaction is L-seryl-[protein] + ATP = O-phospho-L-seryl-[protein] + ADP + H(+). The enzyme catalyses L-threonyl-[protein] + ATP = O-phospho-L-threonyl-[protein] + ADP + H(+). When phosphate concentrations are high it phosphorylates the PHO4 transcription factor thus establishing repression. This Eremothecium gossypii (strain ATCC 10895 / CBS 109.51 / FGSC 9923 / NRRL Y-1056) (Yeast) protein is Negative regulator of the PHO system (PHO85).